Here is a 371-residue protein sequence, read N- to C-terminus: Caytaxin (371 aa).

The disordered stretch occupies residues 1-54 (MGTTEATLRMENVDVKEEWQDEDLPRPLPEETGVELLGSPVEDTSSPPNTLNFN). The segment covering 11–29 (ENVDVKEEWQDEDLPRPLP) has biased composition (basic and acidic residues). Polar residues predominate over residues 42-53 (EDTSSPPNTLNF). Residues 115 to 120 (ELEWGD) form a required for interaction with KLC1 region. Residues 171–328 (IRPYMKVVTH…CVLQYEEERL (158 aa)) enclose the CRAL-TRIO domain. The segment at 190-371 (AIIVFAACFL…VTEDQETSMS (182 aa)) is mediates interaction with GLS. The interval 331 to 371 (RRESARPQPEFVMPRSEEKPEVAPVENRSAPVTEDQETSMS) is disordered.

As to quaternary structure, interacts with KLC1; may link mitochondria to KLC1 and regulate mitochondria localization into neuron projections. Interacts with GLS; the interaction is direct and may control GLS localization, negatively regulating its activity. Interacts with PIN1 (via WW domain); upon NGF stimulation. The interaction with PIN1 and GLS is competitive. Post-translationally, cleaved by CASP3 and CASP7. The potential C-terminal product released by CASP3 cleavage may inhibit the ERK signaling pathway through MAP2K2. May be ubiquitinated by STUB1.

It is found in the cell projection. The protein localises to the axon. It localises to the dendrite. Its subcellular location is the presynapse. The protein resides in the mitochondrion. It is found in the growth cone. The protein localises to the cytoplasm. Its function is as follows. Functions in the development of neural tissues, particularly the postnatal maturation of the cerebellar cortex. May play a role in neurotransmission through regulation of glutaminase/GLS, an enzyme responsible for the production in neurons of the glutamate neurotransmitter. Alternatively, may regulate the localization of mitochondria within axons and dendrites. This Macaca fascicularis (Crab-eating macaque) protein is Caytaxin (ATCAY).